The sequence spans 303 residues: Probable cell division protein WhiA (303 aa).

The H-T-H motif DNA-binding region spans 272 to 303 (SIQQIADSIEPPLTKSGVNHRLRKINKIADDL).

This sequence belongs to the WhiA family.

Functionally, involved in cell division and chromosome segregation. In Streptococcus thermophilus (strain ATCC BAA-250 / LMG 18311), this protein is Probable cell division protein WhiA.